Consider the following 670-residue polypeptide: Rhophilin-1 (670 aa).

Residues 1–20 (MILEERPDGAGAGEESPRLQ) form a disordered region. The REM-1 domain occupies 23 to 97 (DSLTQIQCGQ…LEELSGGVDP (75 aa)). Phosphoserine is present on Ser24. Residues 108-457 (PMIPLGLKET…LAKYAELDRE (350 aa)) enclose the BRO1 domain. The PDZ domain occupies 513–592 (PVHLTRGEGG…ASLQVVSLLP (80 aa)). A disordered region spans residues 616 to 670 (QREHGCKTPASTWASPRPLLNWSRKAQQGKTGGCPQPCAPVKPAPPSSLKHPGWP). Over residues 652 to 661 (PCAPVKPAPP) the composition is skewed to pro residues.

This sequence belongs to the RHPN family. As to quaternary structure, binds specifically to GTP-Rho. Interacts with ROPN1.

Functionally, has no enzymatic activity. May serve as a target for Rho, and interact with some cytoskeletal component upon Rho binding or relay a Rho signal to other molecules. The polypeptide is Rhophilin-1 (Homo sapiens (Human)).